Consider the following 911-residue polypeptide: Bifunctional aspartokinase/homoserine dehydrogenase 1, chloroplastic (911 aa).

Residues M1–D82 constitute a chloroplast transit peptide. Residues S83–L331 are aspartokinase. The interval S332–I557 is interface. 2 ACT domains span residues V407–N482 and A488–G565. A homoserine dehydrogenase region spans residues I558–S911. I563 and T644 together coordinate NAD(+). Positions 563, 644, and 668 each coordinate NADP(+). NADPH is bound by residues I563, T644, and K668. Residues E695, V698, A700, and L702 each contribute to the Na(+) site. NADP(+) is bound by residues G753 and E756. L-homoserine contacts are provided by E756 and D767. The active-site Proton donor is K771. NAD(+) is bound at residue G888. G888 provides a ligand contact to NADP(+). G888 contributes to the NADPH binding site.

It in the N-terminal section; belongs to the aspartokinase family. In the C-terminal section; belongs to the homoserine dehydrogenase family. Homo- or heterodimer. A metal cation serves as cofactor.

The protein resides in the plastid. The protein localises to the chloroplast. It carries out the reaction L-homoserine + NADP(+) = L-aspartate 4-semialdehyde + NADPH + H(+). It catalyses the reaction L-homoserine + NAD(+) = L-aspartate 4-semialdehyde + NADH + H(+). The enzyme catalyses L-aspartate + ATP = 4-phospho-L-aspartate + ADP. It functions in the pathway amino-acid biosynthesis; L-lysine biosynthesis via DAP pathway; (S)-tetrahydrodipicolinate from L-aspartate: step 1/4. Its pathway is amino-acid biosynthesis; L-methionine biosynthesis via de novo pathway; L-homoserine from L-aspartate: step 1/3. It participates in amino-acid biosynthesis; L-methionine biosynthesis via de novo pathway; L-homoserine from L-aspartate: step 3/3. The protein operates within amino-acid biosynthesis; L-threonine biosynthesis; L-threonine from L-aspartate: step 1/5. It functions in the pathway amino-acid biosynthesis; L-threonine biosynthesis; L-threonine from L-aspartate: step 3/5. With respect to regulation, inhibition of aspartate kinase activity by threonine and leucine and 3-fold activation by cysteine, isoleucine, valine, serine and alanine at 2.5 mM. Partial inhibition of homoserine dehydrogenase activity by threonine and cysteine (14% of activity remaining at saturation with either amino acid). No synergy between the effectors for both activation or inhibition. In terms of biological role, bifunctional aspartate kinase and homoserine dehydrogenase that catalyzes the first and the third steps toward the synthesis of lysine, methionine and threonine from aspartate. The sequence is that of Bifunctional aspartokinase/homoserine dehydrogenase 1, chloroplastic from Arabidopsis thaliana (Mouse-ear cress).